A 217-amino-acid chain; its full sequence is UPF0173 metal-dependent hydrolase MJ1163 (217 aa).

This sequence belongs to the UPF0173 family.

This is UPF0173 metal-dependent hydrolase MJ1163 from Methanocaldococcus jannaschii (strain ATCC 43067 / DSM 2661 / JAL-1 / JCM 10045 / NBRC 100440) (Methanococcus jannaschii).